Reading from the N-terminus, the 867-residue chain is uncharacterized protein (867 aa).

Residues 1-294 (MKFSHSLQFN…GSSLRESYMK (294 aa)) form the SPX domain. Disordered stretches follow at residues 105–152 (QGNN…GQTS) and 165–228 (ESTA…NNNR). The segment covering 138-152 (ITSSNREIYLNGQTS) has biased composition (polar residues). The segment covering 198-223 (GNDDEVEEEDDDDDDEDEDEDEDEDN) has biased composition (acidic residues). The next 12 membrane-spanning stretches (helical) occupy residues 406-426 (TIATLITIIVIFILLLSFPVI), 434-454 (CLALLVMVSLLWATEAIPLFV), 485-505 (VIFSSMWNPTIVLLLGGFTIA), 537-557 (MFVAMFASMWISNVAAPVLCF), 576-596 (ILIVGIALASNVGGIASPISS), 616-636 (FAVSIPVSLLCIFSIWFLLSF), 656-676 (FTGVQWFISIVTIGTIVLWCL), 683-703 (VFGDMGVIALVPIIVFFGTGL), 712-732 (FLWTVIVLAMGGVALGKVVSS), 755-775 (VLLIFSALTLVVSSFISHIVA), 797-817 (LFVLASGMMCSLAMALPTSGF), and 842-862 (AGIPATLISFVILLLIGTPIM).

Belongs to the CitM (TC 2.A.11) transporter family.

Its subcellular location is the endoplasmic reticulum membrane. This is an uncharacterized protein from Schizosaccharomyces pombe (strain 972 / ATCC 24843) (Fission yeast).